Reading from the N-terminus, the 160-residue chain is SsrA-binding protein (160 aa).

A compositionally biased stretch (basic and acidic residues) spans 138–148 (KRDDIKDREWQ). The segment at 138–160 (KRDDIKDREWQTAKSRIMKHANR) is disordered.

It belongs to the SmpB family.

It localises to the cytoplasm. Required for rescue of stalled ribosomes mediated by trans-translation. Binds to transfer-messenger RNA (tmRNA), required for stable association of tmRNA with ribosomes. tmRNA and SmpB together mimic tRNA shape, replacing the anticodon stem-loop with SmpB. tmRNA is encoded by the ssrA gene; the 2 termini fold to resemble tRNA(Ala) and it encodes a 'tag peptide', a short internal open reading frame. During trans-translation Ala-aminoacylated tmRNA acts like a tRNA, entering the A-site of stalled ribosomes, displacing the stalled mRNA. The ribosome then switches to translate the ORF on the tmRNA; the nascent peptide is terminated with the 'tag peptide' encoded by the tmRNA and targeted for degradation. The ribosome is freed to recommence translation, which seems to be the essential function of trans-translation. This is SsrA-binding protein from Serratia proteamaculans (strain 568).